Reading from the N-terminus, the 366-residue chain is L-tyrosine C(3)-methyltransferase (366 aa).

Over residues 1 to 12 the composition is skewed to polar residues; the sequence is MTISLENTTVGQ. The segment at 1 to 22 is disordered; the sequence is MTISLENTTVGQNPAGGPPTGK. Residue E223 coordinates S-adenosyl-L-methionine.

This sequence belongs to the class I-like SAM-binding methyltransferase superfamily. Cation-independent O-methyltransferase family.

It carries out the reaction L-tyrosine + S-adenosyl-L-methionine = 3-methyl-L-tyrosine + S-adenosyl-L-homocysteine + H(+). It functions in the pathway antibiotic biosynthesis. Functionally, C-methyltransferase that mediates the methylation of tyrosine into 3-methyl-L-tyrosine (3-Me-Tyr) in biosynthesis of saframycin A, a potent antitumor antibiotic that belongs to the tetrahydroisoquinoline family. Involved in biosynthesis of 3-hydroxy-5-methyl-O-methyltyrosine (3-OH-5-Me-OMe-Tyr), a core structure of saframycin A. In Streptomyces lavendulae, this protein is L-tyrosine C(3)-methyltransferase.